Reading from the N-terminus, the 519-residue chain is O-fucosyltransferase 1 (519 aa).

The Cytoplasmic portion of the chain corresponds to 1 to 24 (MRRLGHHRLHGKTGGVGTKGMVAK). Residues 25–45 (LSIGVIVLLICTLSLLFSANI) traverse the membrane as a helical; Signal-anchor for type II membrane protein segment. Residues 46-519 (GSNREPTRPS…TNSTVTGLER (474 aa)) lie on the Lumenal side of the membrane. The segment at 67–86 (KSGGWRPSSAPRSDWPPPTK) is disordered. A glycan (N-linked (GlcNAc...) asparagine) is linked at Asn-118. 260–262 (HLR) is a substrate binding site. Residues Asn-327, Asn-357, and Asn-511 are each glycosylated (N-linked (GlcNAc...) asparagine). A disordered region spans residues 497–519 (RLESIRDPDSTSQTNSTVTGLER). A compositionally biased stretch (polar residues) spans 506–519 (STSQTNSTVTGLER).

It belongs to the glycosyltransferase GT106 family.

The protein resides in the golgi apparatus membrane. Its pathway is glycan metabolism. This is O-fucosyltransferase 1 from Arabidopsis thaliana (Mouse-ear cress).